The primary structure comprises 209 residues: FMN-dependent NADH:quinone oxidoreductase 2 (209 aa).

FMN is bound by residues S9, 15–17, and 97–100; these read SVS and MWNF.

This sequence belongs to the azoreductase type 1 family. In terms of assembly, homodimer. Requires FMN as cofactor.

It carries out the reaction 2 a quinone + NADH + H(+) = 2 a 1,4-benzosemiquinone + NAD(+). It catalyses the reaction N,N-dimethyl-1,4-phenylenediamine + anthranilate + 2 NAD(+) = 2-(4-dimethylaminophenyl)diazenylbenzoate + 2 NADH + 2 H(+). Its function is as follows. Quinone reductase that provides resistance to thiol-specific stress caused by electrophilic quinones. Also exhibits azoreductase activity. Catalyzes the reductive cleavage of the azo bond in aromatic azo compounds to the corresponding amines. The sequence is that of FMN-dependent NADH:quinone oxidoreductase 2 from Pseudomonas syringae pv. tomato (strain ATCC BAA-871 / DC3000).